The sequence spans 131 residues: Small ribosomal subunit protein uS11 (131 aa).

The protein belongs to the universal ribosomal protein uS11 family. Part of the 30S ribosomal subunit. Interacts with proteins S7 and S18. Binds to IF-3.

In terms of biological role, located on the platform of the 30S subunit, it bridges several disparate RNA helices of the 16S rRNA. Forms part of the Shine-Dalgarno cleft in the 70S ribosome. The protein is Small ribosomal subunit protein uS11 of Helicobacter pylori (strain P12).